We begin with the raw amino-acid sequence, 341 residues long: Phenylalanine--tRNA ligase alpha subunit (341 aa).

Mg(2+) is bound at residue Glu254.

This sequence belongs to the class-II aminoacyl-tRNA synthetase family. Phe-tRNA synthetase alpha subunit type 1 subfamily. Tetramer of two alpha and two beta subunits. The cofactor is Mg(2+).

It localises to the cytoplasm. It carries out the reaction tRNA(Phe) + L-phenylalanine + ATP = L-phenylalanyl-tRNA(Phe) + AMP + diphosphate + H(+). The chain is Phenylalanine--tRNA ligase alpha subunit from Chlorobium limicola (strain DSM 245 / NBRC 103803 / 6330).